A 331-amino-acid polypeptide reads, in one-letter code: Phosphoribosylformylglycinamidine cyclo-ligase (331 aa).

This sequence belongs to the AIR synthase family.

It is found in the cytoplasm. It catalyses the reaction 2-formamido-N(1)-(5-O-phospho-beta-D-ribosyl)acetamidine + ATP = 5-amino-1-(5-phospho-beta-D-ribosyl)imidazole + ADP + phosphate + H(+). It participates in purine metabolism; IMP biosynthesis via de novo pathway; 5-amino-1-(5-phospho-D-ribosyl)imidazole from N(2)-formyl-N(1)-(5-phospho-D-ribosyl)glycinamide: step 2/2. This chain is Phosphoribosylformylglycinamidine cyclo-ligase, found in Clostridium botulinum (strain ATCC 19397 / Type A).